A 347-amino-acid polypeptide reads, in one-letter code: N-acetyl-gamma-glutamyl-phosphate reductase (347 aa).

Residue Cys152 is part of the active site.

This sequence belongs to the NAGSA dehydrogenase family. Type 1 subfamily.

The protein resides in the cytoplasm. It carries out the reaction N-acetyl-L-glutamate 5-semialdehyde + phosphate + NADP(+) = N-acetyl-L-glutamyl 5-phosphate + NADPH + H(+). It functions in the pathway amino-acid biosynthesis; L-arginine biosynthesis; N(2)-acetyl-L-ornithine from L-glutamate: step 3/4. Catalyzes the NADPH-dependent reduction of N-acetyl-5-glutamyl phosphate to yield N-acetyl-L-glutamate 5-semialdehyde. This Neisseria meningitidis serogroup C / serotype 2a (strain ATCC 700532 / DSM 15464 / FAM18) protein is N-acetyl-gamma-glutamyl-phosphate reductase.